Reading from the N-terminus, the 952-residue chain is Pentatricopeptide repeat-containing protein At5g04810, chloroplastic (952 aa).

A chloroplast-targeting transit peptide spans 1–60 (MDNGGSVLSLSAPHFPYSATILRRHSPVASISFSLKQPPPQPPEPPESPPDLRRPEKSIG). 2 disordered regions span residues 30-95 (SISF…VSPL) and 115-163 (LRLS…EFRQ). Residues 37 to 49 (QPPPQPPEPPESP) show a composition bias toward pro residues. The span at 58-68 (SIGSSSSSSSP) shows a compositional bias: low complexity. The segment covering 122 to 133 (SPPPPPPPPPPV) has biased composition (pro residues). The span at 137–163 (TQFRDEFRSDTKPPEEETRNPQQEFRQ) shows a compositional bias: basic and acidic residues. The 72-residue stretch at 167–238 (IFVGNLPTWI…VEFHGRILTV (72 aa)) folds into the RRM domain. A compositionally biased stretch (basic and acidic residues) spans 259–280 (EGEEDTKMSNKSSWHQEREGSR). A disordered region spans residues 259 to 281 (EGEEDTKMSNKSSWHQEREGSRK). PPR repeat units follow at residues 308–342 (SRTEFGLMVKFYGRRGDMHRARETFERMRARGITP), 343–377 (TSRIYTSLIHAYAVGRDMDEALSCVRKMKEEGIEM), 378–412 (SLVTYSVIVGGFSKAGHAEAADYWFDEAKRIHKTL), 413–447 (NASIYGKIIYAHCQTCNMERAEALVREMEEEGIDA), 448–482 (PIAIYHTMMDGYTMVADEKKGLVVFKRLKECGFTP), 483–517 (TVVTYGCLINLYTKVGKISKALEVSRVMKEEGVKH), 518–552 (NLKTYSMMINGFVKLKDWANAFAVFEDMVKEGMKP), 553–587 (DVILYNNIISAFCGMGNMDRAIQTVKEMQKLRHRP), 588–622 (TTRTFMPIIHGYAKSGDMRRSLEVFDMMRRCGCVP), 623–657 (TVHTFNGLINGLVEKRQMEKAVEILDEMTLAGVSA), 658–692 (NEHTYTKIMQGYASVGDTGKAFEYFTRLQNEGLDV), 693–727 (DIFTYEALLKACCKSGRMQSALAVTKEMSARNIPR), 728–762 (NSFVYNILIDGWARRGDVWEAADLIQQMKKEGVKP), 763–797 (DIHTYTSFISACSKAGDMNRATQTIEEMEALGVKP), and 798–832 (NIKTYTTLIKGWARASLPEKALSCYEEMKAMGIKP). The tract at residues 918–952 (DQVSDVDSDEDDVDGEDGEDDEDVNSVSDLLSPYK) is disordered. Over residues 921–941 (SDVDSDEDDVDGEDGEDDEDV) the composition is skewed to acidic residues.

The protein belongs to the PPR family. P subfamily.

The protein localises to the plastid. It localises to the chloroplast. Its function is as follows. May play a role in the plastid ribosome biogenesis. The polypeptide is Pentatricopeptide repeat-containing protein At5g04810, chloroplastic (PPR4) (Arabidopsis thaliana (Mouse-ear cress)).